A 190-amino-acid polypeptide reads, in one-letter code: Elongation factor P-like protein (190 aa).

Belongs to the elongation factor P family.

The protein is Elongation factor P-like protein of Yersinia enterocolitica serotype O:8 / biotype 1B (strain NCTC 13174 / 8081).